Here is a 525-residue protein sequence, read N- to C-terminus: GMP synthase [glutamine-hydrolyzing] (525 aa).

A Glutamine amidotransferase type-1 domain is found at 8–207 (KILILDFGSQ…ALDICQCEAN (200 aa)). The active-site Nucleophile is Cys-85. Catalysis depends on residues His-181 and Glu-183. In terms of domain architecture, GMPS ATP-PPase spans 208–400 (WKPSSIIEDA…LGLPYNMLYR (193 aa)). 235-241 (SGGVDSS) lines the ATP pocket.

Homodimer.

The catalysed reaction is XMP + L-glutamine + ATP + H2O = GMP + L-glutamate + AMP + diphosphate + 2 H(+). The protein operates within purine metabolism; GMP biosynthesis; GMP from XMP (L-Gln route): step 1/1. Catalyzes the synthesis of GMP from XMP. This chain is GMP synthase [glutamine-hydrolyzing], found in Shewanella loihica (strain ATCC BAA-1088 / PV-4).